A 179-amino-acid chain; its full sequence is Large ribosomal subunit protein uL6 (179 aa).

Belongs to the universal ribosomal protein uL6 family. As to quaternary structure, part of the 50S ribosomal subunit.

Functionally, this protein binds to the 23S rRNA, and is important in its secondary structure. It is located near the subunit interface in the base of the L7/L12 stalk, and near the tRNA binding site of the peptidyltransferase center. The polypeptide is Large ribosomal subunit protein uL6 (Bifidobacterium animalis subsp. lactis (strain AD011)).